Consider the following 228-residue polypeptide: Ribosomal RNA small subunit methyltransferase G (228 aa).

S-adenosyl-L-methionine contacts are provided by residues Gly89, Leu94, 140-141 (VE), and Arg159.

The protein belongs to the methyltransferase superfamily. RNA methyltransferase RsmG family.

It is found in the cytoplasm. It carries out the reaction guanosine(527) in 16S rRNA + S-adenosyl-L-methionine = N(7)-methylguanosine(527) in 16S rRNA + S-adenosyl-L-homocysteine. In terms of biological role, specifically methylates the N7 position of guanine in position 527 of 16S rRNA. This chain is Ribosomal RNA small subunit methyltransferase G, found in Burkholderia ambifaria (strain ATCC BAA-244 / DSM 16087 / CCUG 44356 / LMG 19182 / AMMD) (Burkholderia cepacia (strain AMMD)).